The primary structure comprises 342 residues: S-adenosylmethionine:tRNA ribosyltransferase-isomerase (342 aa).

This sequence belongs to the QueA family. In terms of assembly, monomer.

The protein localises to the cytoplasm. The enzyme catalyses 7-aminomethyl-7-carbaguanosine(34) in tRNA + S-adenosyl-L-methionine = epoxyqueuosine(34) in tRNA + adenine + L-methionine + 2 H(+). It participates in tRNA modification; tRNA-queuosine biosynthesis. Functionally, transfers and isomerizes the ribose moiety from AdoMet to the 7-aminomethyl group of 7-deazaguanine (preQ1-tRNA) to give epoxyqueuosine (oQ-tRNA). This chain is S-adenosylmethionine:tRNA ribosyltransferase-isomerase, found in Streptococcus pyogenes serotype M1.